A 265-amino-acid chain; its full sequence is Homeobox protein CDX-1 (265 aa).

Positions 9 to 153 (KDSPVYPGPA…GGGGSGKTRT (145 aa)) are disordered. Pro residues predominate over residues 30-42 (YGPPAPPPAPPQY). Positions 73–92 (AAAYGPGPAAPAASPASLAF) are enriched in low complexity. Residues 93-108 (GPPPDFSPVPAPPGPG) are compositionally biased toward pro residues. The span at 110-126 (GLLAQPLGGPGTPSSPG) shows a compositional bias: low complexity. The homeobox DNA-binding region spans 154–213 (KDKYRVVYTDHQRLELEKEFHYSRYITIRRKSELAANLGLTERQVKIWFQNRRAKERKVN). Residues 157–178 (YRVVYTDHQRLELEKEFHYSRY) are interaction with DNA. An interaction with 5-mCpG DNA region spans residues 196–207 (RQVKIWFQNRRA). A compositionally biased stretch (basic residues) spans 207-217 (AKERKVNKKKQ). The tract at residues 207–265 (AKERKVNKKKQQQQQPPQPPMAHDITATPAGPSLGGLCPSNTSLLATSSPMPVKEEFLP) is disordered. Polar residues predominate over residues 245-256 (PSNTSLLATSSP).

This sequence belongs to the Caudal homeobox family. Intestinal epithelium.

The protein resides in the nucleus. Functionally, plays a role in transcriptional regulation. Involved in activated KRAS-mediated transcriptional activation of PRKD1 in colorectal cancer (CRC) cells. Binds to the PRKD1 promoter in colorectal cancer (CRC) cells. Could play a role in the terminal differentiation of the intestine. Binds preferentially to methylated DNA. The chain is Homeobox protein CDX-1 (CDX1) from Homo sapiens (Human).